The chain runs to 128 residues: Small ribosomal subunit protein uS11 (128 aa).

It belongs to the universal ribosomal protein uS11 family. In terms of assembly, part of the 30S ribosomal subunit. Interacts with proteins S7 and S18. Binds to IF-3.

Its function is as follows. Located on the platform of the 30S subunit, it bridges several disparate RNA helices of the 16S rRNA. Forms part of the Shine-Dalgarno cleft in the 70S ribosome. This is Small ribosomal subunit protein uS11 from Chromohalobacter salexigens (strain ATCC BAA-138 / DSM 3043 / CIP 106854 / NCIMB 13768 / 1H11).